We begin with the raw amino-acid sequence, 205 residues long: MLTVALSKGRLLKDFIKFLERNNNHVWADAIIHRERKLQITADSIKFILVKGSDVPTYVEEGIADIGITGSDILKERPNRNINNYIDLPFGECHFSVAAKPNVTNIQRVATTYVKTTRDYFNQKGTDISIIQLSGSVELAAVVDMVDAIVDIVQTGTTLKSNGLEEREQIGEINARLITNKHSFFSKSKAIENFIQQLGVSIHAQ.

Belongs to the ATP phosphoribosyltransferase family. Short subfamily. In terms of assembly, heteromultimer composed of HisG and HisZ subunits.

The protein resides in the cytoplasm. The enzyme catalyses 1-(5-phospho-beta-D-ribosyl)-ATP + diphosphate = 5-phospho-alpha-D-ribose 1-diphosphate + ATP. It functions in the pathway amino-acid biosynthesis; L-histidine biosynthesis; L-histidine from 5-phospho-alpha-D-ribose 1-diphosphate: step 1/9. Its function is as follows. Catalyzes the condensation of ATP and 5-phosphoribose 1-diphosphate to form N'-(5'-phosphoribosyl)-ATP (PR-ATP). Has a crucial role in the pathway because the rate of histidine biosynthesis seems to be controlled primarily by regulation of HisG enzymatic activity. The chain is ATP phosphoribosyltransferase from Staphylococcus carnosus (strain TM300).